An 82-amino-acid chain; its full sequence is M-theraphotoxin-Gr1a (82 aa).

The N-terminal stretch at 1 to 21 (MKTSVVFVIAGLALLSVVCYA) is a signal peptide. Residues 22–46 (SELKEQSSVNEVLSTIFHFEQPEER) constitute a propeptide that is removed on maturation. 3 disulfides stabilise this stretch: cysteine 48/cysteine 63, cysteine 55/cysteine 69, and cysteine 62/cysteine 76. Phenylalanine amide is present on phenylalanine 80.

The protein belongs to the neurotoxin 10 (Hwtx-1) family. 52 (MTx4) subfamily. Expressed by the venom gland.

Its subcellular location is the secreted. Functionally, this cationic hydrophobic peptide acts on a lot of different channels and has an antimicrobial activity. It blocks mechanosensitive ion channels (also named stretch-activated channels or SACs), without having effect on whole-cell voltage-sensitive currents. It also affects acetylcholine receptors (nAChRs) through interactions with membrane lipids by prolonging the closing time without affecting channel conductance or opening activity. It shows high affinity for lipid bilayers. It acts by partitioning into the membrane and perturbing the interface between the channel and the lipid bilayer without necessarily being in physical contact with the channel. It inhibits atrial fibrillation as well as the membrane motor of outer hair cells at low doses. It also binds to the voltage sensor of voltage-gated potassium channels from the archaebacterium Aeropyrum pernix (KvAP) without affecting channel gating. It also shows a low inhibition on a large spectra of sodium channels (Nav1.1/SCN1A, Nav1.2/SCN2A, Nav1.3/SCN3A, Nav1.4/SCN4A, Nav1.5/SCN5A, Nav1.6/SCN8A, Nav1.7/SCN9A) (IC(50)=7.4-14 uM), and potassium channels Kv11.1/KCNH2 and Kv11.2/KCNH6 (IC(50)=11 uM for both). It exhibits antimicrobial activities against the Gram-positive bacteria B.subtilis (MIC=0.5 uM), S.aureus (MIC=2-4 uM), and S.epidermidis (MIC=4-8 uM), and Gram-negative bacteria S.typhimurium (MIC=32.64 uM), P.aeruginosa (MIC=8-16 uM), and E.coli (MIC=8-16 uM). This Grammostola rosea (Chilean rose tarantula) protein is M-theraphotoxin-Gr1a.